Here is a 418-residue protein sequence, read N- to C-terminus: Methionine aminopeptidase 2 (418 aa).

The segment at 18 to 49 (VSEPAAVDDSEVTEDATVQDKKKKKKKKKKKG) is disordered. Residues 38–49 (KKKKKKKKKKKG) are compositionally biased toward basic residues. Histidine 172 is a substrate binding site. A divalent metal cation-binding residues include aspartate 192, aspartate 203, and histidine 272. Residue histidine 280 participates in substrate binding. The a divalent metal cation site is built by glutamate 305 and glutamate 399.

The protein belongs to the peptidase M24A family. Methionine aminopeptidase eukaryotic type 2 subfamily. The cofactor is Co(2+). Requires Zn(2+) as cofactor. It depends on Mn(2+) as a cofactor. Fe(2+) is required as a cofactor.

Its subcellular location is the cytoplasm. The catalysed reaction is Release of N-terminal amino acids, preferentially methionine, from peptides and arylamides.. In terms of biological role, cotranslationally removes the N-terminal methionine from nascent proteins. The N-terminal methionine is often cleaved when the second residue in the primary sequence is small and uncharged (Met-Ala-, Cys, Gly, Pro, Ser, Thr, or Val). The chain is Methionine aminopeptidase 2 from Kluyveromyces lactis (strain ATCC 8585 / CBS 2359 / DSM 70799 / NBRC 1267 / NRRL Y-1140 / WM37) (Yeast).